Reading from the N-terminus, the 181-residue chain is LEM domain-containing protein 1 (181 aa).

An LEM domain is found at Met1–Pro45. The helical; Signal-anchor for type II membrane protein transmembrane segment at Phe152 to Leu172 threads the bilayer.

As to expression, testis-specific. Isoform 6 is detected in 17 of 18 colon cancer tissues examined.

The protein resides in the membrane. This chain is LEM domain-containing protein 1 (LEMD1), found in Homo sapiens (Human).